The primary structure comprises 310 residues: Alpha/beta hydrolase domain-containing protein 17A (310 aa).

The segment at 38–61 is disordered; the sequence is VPEPEPGPGGAGAAPSGPLRTSAA. Catalysis depends on charge relay system residues Ser-190, Asp-255, and His-284. A Phosphoserine modification is found at Ser-307.

Belongs to the AB hydrolase superfamily. ABHD17 family. Palmitoylated on cysteine residues located in a cysteine cluster at the N-terminus which promotes membrane localization. Palmitoylation is required for post-synaptic localization and for depalmitoylating activity towards DLG4/PSD95. As to expression, expressed in brain (at protein level). Expressed in hippocampal neurons.

The protein localises to the cell membrane. Its subcellular location is the recycling endosome membrane. It is found in the cell projection. It localises to the dendritic spine. The protein resides in the postsynaptic density membrane. The catalysed reaction is S-hexadecanoyl-L-cysteinyl-[protein] + H2O = L-cysteinyl-[protein] + hexadecanoate + H(+). Hydrolyzes fatty acids from S-acylated cysteine residues in proteins. Has depalmitoylating activity towards NRAS. Has depalmitoylating activity towards DLG4/PSD95. May have depalmitoylating activity towards MAP6. The protein is Alpha/beta hydrolase domain-containing protein 17A of Rattus norvegicus (Rat).